A 214-amino-acid chain; its full sequence is A-type ATP synthase subunit D (214 aa).

Belongs to the V-ATPase D subunit family. In terms of assembly, has multiple subunits with at least A(3), B(3), C, D, E, F, H, I and proteolipid K(x).

Its subcellular location is the cell membrane. Its function is as follows. Component of the A-type ATP synthase that produces ATP from ADP in the presence of a proton gradient across the membrane. The chain is A-type ATP synthase subunit D from Methanosphaera stadtmanae (strain ATCC 43021 / DSM 3091 / JCM 11832 / MCB-3).